A 462-amino-acid chain; its full sequence is MEHRLWGGRFSEPTAAEMRRFNDSFRFDRRLADVDITGSIAWAGALAQAGLIDEDEYAALVRGLELVRAEFANGTFVPAEGDEDIHTAVERRLRELIGDAALKLHTGRSRNDQVATDMRLYTIGIARQLDRRLRDLQLALLTQAELHTDTLMPGYTHLQRAQPITFGHWCLAYIEMFARDRSRLRDAITRMRVLPLGAGALAGNALGIERERLTELLDEFDELAANSLDAVSDRDFVAEILFICALIGIHLSRLAEDIILYASAEFGFIELADAYSTGSSLMPQKKNPDSMELLRGKSGRLLGNVVTLLTVLKGLPLTYNKDMQEDKEPLFDSFDTLDLGLQVAAAALATMTVHPERMAAALDDAMLATDLADELVRRGIPFRVAHGKVGQLVRRAQTLGVSLRHLPLTEYQAVEPSLDAGVYAIFDMARSVAQKASYGGTAPQRVREQCRRWRTILVESEA.

The protein belongs to the lyase 1 family. Argininosuccinate lyase subfamily.

It is found in the cytoplasm. It carries out the reaction 2-(N(omega)-L-arginino)succinate = fumarate + L-arginine. It functions in the pathway amino-acid biosynthesis; L-arginine biosynthesis; L-arginine from L-ornithine and carbamoyl phosphate: step 3/3. This chain is Argininosuccinate lyase, found in Chloroflexus aggregans (strain MD-66 / DSM 9485).